The primary structure comprises 366 residues: Short-chain collagen C4 (366 aa).

Low complexity predominate over residues 1 to 14 (DTGPQGPQGVAGPP). Triple-helical region stretches follow at residues 1 to 23 (DTGPQGPQGVAGPPGIDGAKGDK) and 40 to 210 (GPPG…NGAV). The disordered stretch occupies residues 1 to 207 (DTGPQGPQGV…QGPQGAPGSN (207 aa)). The span at 28–45 (YPPPPTCPTCPAGPPGAP) shows a compositional bias: pro residues. Composition is skewed to low complexity over residues 75–90 (PGNDGQPGAPGAPGYD) and 99–110 (TGAPGPQGPKGD). Positions 138–149 (DGQDGAKGDKGD) are enriched in basic and acidic residues. 2 stretches are compositionally biased toward low complexity: residues 150-168 (QGPAGTPGAPGKDGAQGPA) and 189-201 (QGPKGDVGPQGPQ).

The protein resides in the secreted. It is found in the extracellular space. Its subcellular location is the extracellular matrix. This chain is Short-chain collagen C4, found in Ephydatia muelleri (Mueller's freshwater sponge).